A 348-amino-acid chain; its full sequence is MDLFPLARPLMSLMDPETAHGLTLRALRLGLGPTRRAPDPVSLAIDLFGLHFENPLGIAAGFDKNGEVPDAMLAMGMGFAEVGTVTPLPQPGNPRPRVFRLPVHRAVINRLGFNNQGHAALKKRLLARRKRPGILGVNIGANKDAADRIADYEAGIRAFEGLASYFTVNISSPNTPGLRALQNKAELQNLVARVLAARKGKTPVLLKIAPDLNAEELGDIAEVALEQGLDGLIVSNTTIAREGLVSGVNANETGGLSGAPLFPMSTAVLRDMYRLTGGRLPLVGVGGISSADDAYAKIRAGASLVQLYSALTYDGPPLVARIKQGLAARLAADGFAHLKDAVGADVNL.

Residues 60 to 64 (AGFDK) and Thr-84 each bind FMN. Residue Lys-64 participates in substrate binding. 109–113 (NRLGF) is a substrate binding site. Residues Asn-138 and Asn-169 each coordinate FMN. Position 169 (Asn-169) interacts with substrate. Catalysis depends on Ser-172, which acts as the Nucleophile. Asn-174 is a substrate binding site. Residues Lys-207 and Ser-235 each coordinate FMN. 236 to 237 (NT) lines the substrate pocket. Residues Gly-258, Gly-287, and 308–309 (YS) contribute to the FMN site.

This sequence belongs to the dihydroorotate dehydrogenase family. Type 2 subfamily. As to quaternary structure, monomer. The cofactor is FMN.

It is found in the cell membrane. The enzyme catalyses (S)-dihydroorotate + a quinone = orotate + a quinol. It functions in the pathway pyrimidine metabolism; UMP biosynthesis via de novo pathway; orotate from (S)-dihydroorotate (quinone route): step 1/1. In terms of biological role, catalyzes the conversion of dihydroorotate to orotate with quinone as electron acceptor. The chain is Dihydroorotate dehydrogenase (quinone) from Parvibaculum lavamentivorans (strain DS-1 / DSM 13023 / NCIMB 13966).